The sequence spans 278 residues: Large ribosomal subunit protein uL2 (278 aa).

The disordered stretch occupies residues 201-278 (HGNINDGKAG…IMRSRHQRKK (78 aa)). Positions 210 to 221 (GRSRWRGKRPHV) are enriched in basic residues.

This sequence belongs to the universal ribosomal protein uL2 family. Part of the 50S ribosomal subunit. Forms a bridge to the 30S subunit in the 70S ribosome.

One of the primary rRNA binding proteins. Required for association of the 30S and 50S subunits to form the 70S ribosome, for tRNA binding and peptide bond formation. It has been suggested to have peptidyltransferase activity; this is somewhat controversial. Makes several contacts with the 16S rRNA in the 70S ribosome. In Agrobacterium fabrum (strain C58 / ATCC 33970) (Agrobacterium tumefaciens (strain C58)), this protein is Large ribosomal subunit protein uL2.